Consider the following 785-residue polypeptide: MGLQPLEFSDCYLDSPWFRERIRAHEAELERTNKFIKELIKDGKNLIAATKTLSAAQRKFAHSLRDFKFEFIGDAETDDERCIDASLREFSNFLKNLEEQREIMALSVTETLIKPLEKFRKEQLGAVKEEKKKFDKETERNYSLIDKHLNLSAKKKDSHLQEADIQVEQNRQHFYELSLEYVCKLQEIQERKKFEFVEPMLSFFQGMFTFYHQGHELAKDFNHYKMELQINIQNTRNRFEGTRSEVEELMNKIRQNPKDHKRASQFTAEGYLYVQEKRPPPFGSSWVKHYCMYRKAAKKFTMIPFEHRSGGKLGDGEVFFLKECIRRHTDSIDRRFCFDVEAADRPGISLTMQAFSEEERKQWLEVLGGKEALFPSFNRAIIPRPEGSAQLDKMGFTILRKCIRAVETRGINDQGLYRVVGVSSKVQRLLSMLMDVKTCNEVDLENSVDWEVKTITSALKQYLRSLPEPLMTYELHGDFIVPAKSGSPESRVNAIHFLVHKLPEKNKEMLDILVKHLTNVSNHSKQNLMTVANLGVVFGPTLMRPQEETVAAIMDLKFQNIVVEILIENHEKIFRTPPDATLPEPGPLSAPPNAPPRQSKRQGQRTKRPVAVYNLCLELEDGDRPSLPKEDTPPSSLDSLSSPSPTTATALGHPGPDRNHLLTDGGSFGDWAPTAPSQARSSAVQWLNPQSPTTPSCSPAVTPPSPKLPPVPLSLPATVADKPPESIISRKARAVYPCEAEHSSELSFEIGAIFEDVQTSREPGWLEGTLNGKRGLIPQNYVKLL.

The region spanning 7–262 (EFSDCYLDSP…IRQNPKDHKR (256 aa)) is the BAR domain. Residues 265–372 (QFTAEGYLYV…WLEVLGGKEA (108 aa)) form the PH domain. Residues 389 to 574 (AQLDKMGFTI…ILIENHEKIF (186 aa)) form the Rho-GAP domain. The tract at residues 576 to 708 (TPPDATLPEP…PAVTPPSPKL (133 aa)) is disordered. The segment covering 584–595 (EPGPLSAPPNAP) has biased composition (pro residues). Residues 598–608 (QSKRQGQRTKR) are compositionally biased toward basic residues. The span at 622-632 (GDRPSLPKEDT) shows a compositional bias: basic and acidic residues. Positions 633-650 (PPSSLDSLSSPSPTTATA) are enriched in low complexity. The segment covering 675 to 697 (APSQARSSAVQWLNPQSPTTPSC) has biased composition (polar residues). Positions 727–785 (IISRKARAVYPCEAEHSSELSFEIGAIFEDVQTSREPGWLEGTLNGKRGLIPQNYVKLL) constitute an SH3 domain.

In terms of assembly, interacts with PKN3. Interacts with caspase-activated PAK2 proteolytic fragment PAK-2p34; the interaction does not affect ARHGAP10 GTPase activation activity towards RHOA and CDC42. Interacts via its SH3 domain with PTK2/FAK1. Interacts with PTK2B/PYK2; the interaction negatively regulates ARHGAP10 GTPase-activating activity. Interacts with MICAL1 and WDR44; complex formation might transit from GRAF2/ARHGAP10-MICAL1 to GRAF2/ARHGAP10-WDR44 complexes.

The protein resides in the cytoplasm. It localises to the perinuclear region. The protein localises to the cell membrane. It is found in the endosome membrane. Functionally, GTPase-activating protein that catalyzes the conversion of active GTP-bound Rho GTPases to their inactive GDP-bound form, thus suppressing various Rho GTPase-mediated cellular processes. Also converts Cdc42 to an inactive GDP-bound state. Essential for PTKB2 regulation of cytoskeletal organization via Rho family GTPases. Inhibits PAK2 proteolytic fragment PAK-2p34 kinase activity and changes its localization from the nucleus to the perinuclear region. Stabilizes PAK-2p34 thereby increasing stimulation of cell death. Associates with MICAL1 on the endosomal membrane to promote Rab8-Rab10-dependent tubule extension. After dissociation with MICAL1, recruits WDR44 which connects the endoplasmic reticulum (ER) with the endosomal tubule, thereby participating in the export of a subset of neosynthesized proteins. In Bos taurus (Bovine), this protein is Rho GTPase-activating protein 10 (ARHGAP10).